Consider the following 120-residue polypeptide: Large ribosomal subunit protein bL20 (120 aa).

It belongs to the bacterial ribosomal protein bL20 family.

Functionally, binds directly to 23S ribosomal RNA and is necessary for the in vitro assembly process of the 50S ribosomal subunit. It is not involved in the protein synthesizing functions of that subunit. This chain is Large ribosomal subunit protein bL20, found in Chlamydia abortus (strain DSM 27085 / S26/3) (Chlamydophila abortus).